A 53-amino-acid polypeptide reads, in one-letter code: ATP synthase protein 8 (53 aa).

Residues 10–30 traverse the membrane as a helical segment; sequence IMVFLVSMALLWAIMTMVFFL.

Belongs to the ATPase protein 8 family. As to quaternary structure, F-type ATPases have 2 components, CF(1) - the catalytic core - and CF(0) - the membrane proton channel.

Its subcellular location is the mitochondrion membrane. Functionally, mitochondrial membrane ATP synthase (F(1)F(0) ATP synthase or Complex V) produces ATP from ADP in the presence of a proton gradient across the membrane which is generated by electron transport complexes of the respiratory chain. F-type ATPases consist of two structural domains, F(1) - containing the extramembraneous catalytic core and F(0) - containing the membrane proton channel, linked together by a central stalk and a peripheral stalk. During catalysis, ATP synthesis in the catalytic domain of F(1) is coupled via a rotary mechanism of the central stalk subunits to proton translocation. Part of the complex F(0) domain. Minor subunit located with subunit a in the membrane. In Artemia franciscana (Brine shrimp), this protein is ATP synthase protein 8 (MT-ATP8).